A 291-amino-acid polypeptide reads, in one-letter code: D-alanyl-D-alanine carboxypeptidase (291 aa).

An N-terminal signal peptide occupies residues 1–29; it reads MRLRRAAATVITTGALLAAGTLGATPATA. Ser64 (acyl-ester intermediate) is an active-site residue. Lys67 functions as the Proton acceptor in the catalytic mechanism. Ser125 is a catalytic residue. Lys242 is a binding site for substrate.

It belongs to the peptidase S11 family.

It localises to the secreted. The catalysed reaction is Preferential cleavage: (Ac)2-L-Lys-D-Ala-|-D-Ala. Also transpeptidation of peptidyl-alanyl moieties that are N-acyl substituents of D-alanine.. Its pathway is cell wall biogenesis; peptidoglycan biosynthesis. Removes C-terminal D-alanyl residues from sugar-peptide cell wall precursors. This is D-alanyl-D-alanine carboxypeptidase from Streptomyces sp. (strain K15).